The primary structure comprises 188 residues: MGGGWWWARVARLARLRFRGSLQPPQRPRSGGARGSFAPGHGPRAGASPPPVSELDRADAWLLRKAHETAFLSWFRNGLLSSGIGVISFMQSDMGREAAYGFFLLGGLCVVWGGASYAVGLAALRGPMQLSLAGAAAGVGAVLAASLLWACAVGLYMGQLELDVELVPEDDGAASTEGPDEAGRPPPE.

A mitochondrion-targeting transit peptide spans M1–R96. The disordered stretch occupies residues S21–S53. A Phosphoserine modification is found at S48. 2 consecutive transmembrane segments (helical) span residues F102–A122 and A135–L155. The segment at P168 to E188 is disordered.

The protein belongs to the TMEM160 family. As to expression, expressed in peripheral sensory neurons of dorsal root ganglia (DRG).

It is found in the mitochondrion inner membrane. This is Transmembrane protein 160 from Mus musculus (Mouse).